A 76-amino-acid chain; its full sequence is Large ribosomal subunit protein bL31 (76 aa).

Zn(2+)-binding residues include Cys-16, Cys-18, Cys-37, and Cys-40.

It belongs to the bacterial ribosomal protein bL31 family. Type A subfamily. In terms of assembly, part of the 50S ribosomal subunit. Requires Zn(2+) as cofactor.

In terms of biological role, binds the 23S rRNA. This Solibacter usitatus (strain Ellin6076) protein is Large ribosomal subunit protein bL31.